The chain runs to 983 residues: Inner tegument protein (983 aa).

The interaction with large tegument protein stretch occupies residues 474-983 (LNVNTHFAVQ…TSVSLPPASP (510 aa)). The interval 901 to 932 (APWESAPQPPRLRMTPDTDHEESTAGATSVPE) is disordered. A compositionally biased stretch (basic and acidic residues) spans 914-923 (MTPDTDHEES).

It belongs to the herpesviridae inner tegument protein family. Interacts (via C-terminus) with the large tegument protein/LTP (via N-terminus).

It localises to the virion tegument. The protein localises to the host cytoplasm. Its subcellular location is the host nucleus. The protein resides in the host Golgi apparatus. It is found in the host trans-Golgi network. Functionally, plays an essential role in cytoplasmic secondary envelopment during viral egress. Interacts with the capsid via the large tegument protein/LTP and participates in its transport to the host trans-Golgi network (TGN) where secondary envelopment occurs. Modulates tegumentation and capsid accumulation at the viral assembly complex. This is Inner tegument protein (UL47) from Homo sapiens (Human).